A 46-amino-acid polypeptide reads, in one-letter code: Iota-conotoxin-like R11.7 (46 aa).

4-hydroxyproline is present on residues proline 2 and proline 11. Cystine bridges form between cysteine 5/cysteine 19, cysteine 12/cysteine 22, cysteine 18/cysteine 27, and cysteine 21/cysteine 38. At proline 29 the chain carries 4-hydroxyproline. A D-phenylalanine modification is found at phenylalanine 44.

It belongs to the conotoxin I1 superfamily. As to expression, expressed by the venom duct.

The protein localises to the secreted. Its function is as follows. Iota-conotoxins bind to voltage-gated sodium channels (Nav) and act as agonists by shifting the voltage-dependence of activation to more hyperpolarized levels. Produces general excitatory symptoms. This chain is Iota-conotoxin-like R11.7, found in Conus radiatus (Rayed cone).